A 211-amino-acid chain; its full sequence is Protein-L-isoaspartate O-methyltransferase (211 aa).

Residue Ser-60 is part of the active site.

Belongs to the methyltransferase superfamily. L-isoaspartyl/D-aspartyl protein methyltransferase family.

The protein localises to the cytoplasm. The enzyme catalyses [protein]-L-isoaspartate + S-adenosyl-L-methionine = [protein]-L-isoaspartate alpha-methyl ester + S-adenosyl-L-homocysteine. Catalyzes the methyl esterification of L-isoaspartyl residues in peptides and proteins that result from spontaneous decomposition of normal L-aspartyl and L-asparaginyl residues. It plays a role in the repair and/or degradation of damaged proteins. This is Protein-L-isoaspartate O-methyltransferase from Alteromonas mediterranea (strain DSM 17117 / CIP 110805 / LMG 28347 / Deep ecotype).